A 926-amino-acid polypeptide reads, in one-letter code: Transcriptional activator protein acu-15 (926 aa).

Residues 24–51 constitute a DNA-binding region (zn(2)-C6 fungal-type); that stretch reads CDRCRSKKIRCDGIRPCCSQCANVGFEC. Disordered regions lie at residues 100–129, 602–649, and 667–801; these read KMHS…TPAK, LPQS…SASL, and TPQH…TSTG. A compositionally biased stretch (basic and acidic residues) spans 119–129; that stretch reads EIKRDSGTPAK. Low complexity-rich tracts occupy residues 623–632 and 669–681; these read AQQGSPSPSA and QHQQ…LQQQ. 2 stretches are compositionally biased toward polar residues: residues 689-703 and 726-736; these read ARSQ…QKAQ and RTSTGTQSTPN. The span at 740-792 shows a compositional bias: low complexity; the sequence is LSLSSPQSPVSPVQMRSQPHQLQQQQQQQPQPQQQQQQHQRSSIASSHSQQGQ.

It localises to the nucleus. Positive regulator of acetate induction. The protein is Transcriptional activator protein acu-15 (acu-15) of Neurospora crassa (strain ATCC 24698 / 74-OR23-1A / CBS 708.71 / DSM 1257 / FGSC 987).